Reading from the N-terminus, the 350-residue chain is Small ribosomal subunit biogenesis GTPase RsgA (350 aa).

Polar residues predominate over residues 1 to 17; it reads MSKNKLSKGQQRRVNAN. The interval 1 to 27 is disordered; sequence MSKNKLSKGQQRRVNANHQRRLKTSAE. The CP-type G domain occupies 104 to 273; that stretch reads TSVLTRPDFY…VIDSPGVREF (170 aa). GTP contacts are provided by residues 160 to 163 and 214 to 222; these read NKID and GQSGVGKSS. Zn(2+) contacts are provided by Cys297, Cys302, His304, and Cys310.

It belongs to the TRAFAC class YlqF/YawG GTPase family. RsgA subfamily. As to quaternary structure, monomer. Associates with 30S ribosomal subunit, binds 16S rRNA. It depends on Zn(2+) as a cofactor.

The protein resides in the cytoplasm. In terms of biological role, one of several proteins that assist in the late maturation steps of the functional core of the 30S ribosomal subunit. Helps release RbfA from mature subunits. May play a role in the assembly of ribosomal proteins into the subunit. Circularly permuted GTPase that catalyzes slow GTP hydrolysis, GTPase activity is stimulated by the 30S ribosomal subunit. This is Small ribosomal subunit biogenesis GTPase RsgA from Salmonella agona (strain SL483).